A 311-amino-acid chain; its full sequence is MEMMVHGRRDEQYGGLGLGLGLGLSLGVAGGAADDEQPPPRRGAAPPPQQQLCGWNGGGLFSSSSSDHRGRSAMMACHDVIEMPFLRGIDVNRAPAAETTTTTARGPSCSEEDEEPGASSPNSTLSSLSGKRGAPSAATAAAAAASDDEDSGGGSRKKLRLSKDQAAVLEDTFKEHNTLNPKQKAALARQLNLKPRQVEVWFQNRRARTKLKQTEVDCELLKRCCETLTDENRRLHRELQELRALKLATAAAAPHHLYGARVPPPTTLTMCPSCERVASAATTTRNNSGAAPARPVPTRPWPPAAAQRSSA.

Disordered stretches follow at residues 29-69 (AGGA…SDHR) and 97-160 (AETT…KKLR). Positions 119–145 (SSPNSTLSSLSGKRGAPSAATAAAAAA) are enriched in low complexity. A DNA-binding region (homeobox) is located at residues 154–213 (GSRKKLRLSKDQAAVLEDTFKEHNTLNPKQKAALARQLNLKPRQVEVWFQNRRARTKLKQ). Residues 212 to 256 (KQTEVDCELLKRCCETLTDENRRLHRELQELRALKLATAAAAPHH) are leucine-zipper. The disordered stretch occupies residues 279–311 (SAATTTRNNSGAAPARPVPTRPWPPAAAQRSSA). The segment covering 280–289 (AATTTRNNSG) has biased composition (polar residues). The span at 294–303 (RPVPTRPWPP) shows a compositional bias: pro residues.

The protein belongs to the HD-ZIP homeobox family. Class II subfamily. As to quaternary structure, homodimer. May form a heterodimer with HOX2, HOX3 or HOX7. Expressed in root provascular and vascular cylinder, provascular and vascular strands of leaves, provascular and vascular strands of the whole panicle, in mature embryo provascular bundles of scutellum and embryonic axis and provascular and vascular strands of young immature spikelet organs. Expressed in differentiating and differentiated xylem and phloem elements, and in outer and inner bundle sheath cells of all vascular bundles. Expressed in auricles, ligules, culm, guard cells brac hairs and pollen.

It is found in the nucleus. In terms of biological role, probable transcription repressor involved leaf development. Binds to the DNA sequence 5'-CAAT[GC]ATTG-3'. May act as a regulatory switch to specify provascular cell fate. The protein is Homeobox-leucine zipper protein HOX1 (HOX1) of Oryza sativa subsp. indica (Rice).